The following is a 215-amino-acid chain: Vesicle-trafficking protein SEC22b (215 aa).

The Cytoplasmic portion of the chain corresponds to 2-194 (VLLTMIARVA…KYLNMRSTYA (193 aa)). Residues 6 to 119 (MIARVADGLP…YSFIEFDTFI (114 aa)) enclose the Longin domain. At Lys38 the chain carries N6-acetyllysine. The v-SNARE coiled-coil homology domain maps to 134–194 (NLGSINTELQ…KYLNMRSTYA (61 aa)). Phosphoserine is present on Ser137. The residue at position 140 (Thr140) is a Phosphothreonine. Ser164, Ser168, Ser174, and Ser177 each carry phosphoserine. A helical; Anchor for type IV membrane protein transmembrane segment spans residues 195-215 (KLAAVAVFFIMLIVYVRFWWL).

Belongs to the synaptobrevin family. In terms of assembly, interacts with STX17. Component of two distinct SNARE complexes consisting of STX5, GOSR2/BOS1, BET1 and SEC22B or STX18, USE1L, BNIP1/SEC20L and SEC22B. YKT6 can probably replace SEC22B in either complex. Interacts with the COPII Sec23/24 complex composed of SEC23A and SEC24A; recruits SEC22B into COPII-coated vesicles to allow its transport from the endoplasmic reticulum to the Golgi. Interacts with BET1.

Its subcellular location is the endoplasmic reticulum membrane. It localises to the endoplasmic reticulum-Golgi intermediate compartment membrane. It is found in the golgi apparatus. The protein resides in the cis-Golgi network membrane. The protein localises to the trans-Golgi network membrane. Its subcellular location is the melanosome. Its function is as follows. SNARE involved in targeting and fusion of ER-derived transport vesicles with the Golgi complex as well as Golgi-derived retrograde transport vesicles with the ER. This Homo sapiens (Human) protein is Vesicle-trafficking protein SEC22b (SEC22B).